The sequence spans 91 residues: Small ribosomal subunit protein uS19 (91 aa).

The protein belongs to the universal ribosomal protein uS19 family.

Functionally, protein S19 forms a complex with S13 that binds strongly to the 16S ribosomal RNA. The chain is Small ribosomal subunit protein uS19 from Prochlorococcus marinus subsp. pastoris (strain CCMP1986 / NIES-2087 / MED4).